The primary structure comprises 98 residues: Ferredoxin-like protein (98 aa).

The protein to ferredoxins from P.putida and C.tartarivorum, ferredoxin I from A.vinelandii, ferredoxin II from D.desulfuricans.

In terms of biological role, could be a 3Fe-4S cluster-containing protein. The protein is Ferredoxin-like protein (fixX) of Rhizobium leguminosarum.